The primary structure comprises 662 residues: UvrABC system protein B (662 aa).

One can recognise a Helicase ATP-binding domain in the interval 25-412 (EGIEKGLKMQ…SQKIVEQIIR (388 aa)). 38–45 (GVTGSGKT) contacts ATP. The short motif at 91 to 114 (YYDYYQPEAYLPATDTYIEKDSAI) is the Beta-hairpin element. The Helicase C-terminal domain occupies 429-595 (QVDDLYGEIK…TVQKAVRDVI (167 aa)). The UVR domain maps to 622–657 (KQYVEKLTREMKEAAKALEFEKAAMLRDLIIELRAQ).

Belongs to the UvrB family. As to quaternary structure, forms a heterotetramer with UvrA during the search for lesions. Interacts with UvrC in an incision complex.

The protein resides in the cytoplasm. The UvrABC repair system catalyzes the recognition and processing of DNA lesions. A damage recognition complex composed of 2 UvrA and 2 UvrB subunits scans DNA for abnormalities. Upon binding of the UvrA(2)B(2) complex to a putative damaged site, the DNA wraps around one UvrB monomer. DNA wrap is dependent on ATP binding by UvrB and probably causes local melting of the DNA helix, facilitating insertion of UvrB beta-hairpin between the DNA strands. Then UvrB probes one DNA strand for the presence of a lesion. If a lesion is found the UvrA subunits dissociate and the UvrB-DNA preincision complex is formed. This complex is subsequently bound by UvrC and the second UvrB is released. If no lesion is found, the DNA wraps around the other UvrB subunit that will check the other stand for damage. This is UvrABC system protein B from Carboxydothermus hydrogenoformans (strain ATCC BAA-161 / DSM 6008 / Z-2901).